The sequence spans 145 residues: uncharacterized protein (145 aa).

Residues 37–123 form a disordered region; the sequence is GKGTNTAKSS…MDREASYFAP (87 aa). Polar residues predominate over residues 38 to 63; that stretch reads KGTNTAKSSGGNNGTNLNAKRSNTTQ.

This is an uncharacterized protein from Caenorhabditis elegans.